The primary structure comprises 289 residues: MLRDLFVKKKKYAAIPSEQVRKDVPDGVMTKCPKCKKIMYTKEVLKNLKVCVNCGYHHPMNAWERLDSILDEGSFREYDKEMVSLNPLEFPNYEEKLESDRKKTELNEAVVTGEGTIDDMLVVVAVMDSRFRMGSMGSVVGEKIARAVEKAYDLQVPFIIFTASGGARMQEGILSLMQMAKTSVALKKHSNAGGLFISVMTHPTTGGVSASFASIGDYNLAEPGALIGFAGRRVIEQTVREKLPEDFQTAEFLLEHGQLDAVVHRDDMRESLRKILEVHQGGEMAVWQS.

Residues 28 to 289 form the CoA carboxyltransferase N-terminal domain; sequence VMTKCPKCKK…QGGEMAVWQS (262 aa). 4 residues coordinate Zn(2+): Cys-32, Cys-35, Cys-51, and Cys-54. The segment at 32–54 adopts a C4-type zinc-finger fold; that stretch reads CPKCKKIMYTKEVLKNLKVCVNC.

This sequence belongs to the AccD/PCCB family. In terms of assembly, acetyl-CoA carboxylase is a heterohexamer composed of biotin carboxyl carrier protein (AccB), biotin carboxylase (AccC) and two subunits each of ACCase subunit alpha (AccA) and ACCase subunit beta (AccD). The cofactor is Zn(2+).

The protein localises to the cytoplasm. It catalyses the reaction N(6)-carboxybiotinyl-L-lysyl-[protein] + acetyl-CoA = N(6)-biotinyl-L-lysyl-[protein] + malonyl-CoA. The protein operates within lipid metabolism; malonyl-CoA biosynthesis; malonyl-CoA from acetyl-CoA: step 1/1. Its function is as follows. Component of the acetyl coenzyme A carboxylase (ACC) complex. Biotin carboxylase (BC) catalyzes the carboxylation of biotin on its carrier protein (BCCP) and then the CO(2) group is transferred by the transcarboxylase to acetyl-CoA to form malonyl-CoA. The protein is Acetyl-coenzyme A carboxylase carboxyl transferase subunit beta of Bacillus thuringiensis (strain Al Hakam).